Consider the following 1997-residue polypeptide: Otoferlin (1997 aa).

The C2 1 domain occupies 1–98 (MALIVHLKTV…VEENRVEVTD (98 aa)). The Cytoplasmic segment spans residues 1–1963 (MALIVHLKTV…ARYFLWHTYR (1963 aa)). The tract at residues 140–167 (QEEKDSQETDGLLPGSRPSTRISGEKSF) is disordered. C2 domains lie at 235 to 356 (KRSK…HKWA) and 399 to 530 (IEGN…FLPT). Residues 643-692 (VDGMSRPLRPRPRKEPGDEEEVDLIQNSSDDEGDEAGDLASVSSTPPMRP) form a disordered region. Residues 659 to 679 (GDEEEVDLIQNSSDDEGDEAG) are compositionally biased toward acidic residues. Residues 791 to 820 (RERLKSCMRELESMGQQAKSLRAQVKRHTV) adopt a coiled-coil conformation. C2 domains follow at residues 943 to 1068 (LHSF…PPRF) and 1115 to 1241 (RGPI…PNWN). 5 residues coordinate Ca(2+): D975, D981, D1037, D1039, and D1045. 3 disordered regions span residues 1253–1272 (LRNG…SMEP), 1296–1326 (DVAE…ESML), and 1343–1402 (LRQH…EKKK). 2 stretches are compositionally biased toward acidic residues: residues 1314 to 1325 (EEPEEEEPDESM) and 1352 to 1361 (DLEEKEEMES). The span at 1370–1383 (KSKEKSRAAKEEKK) shows a compositional bias: basic and acidic residues. C2 domains are found at residues 1464–1593 (LPED…ATCG) and 1714–1865 (DMPA…KQCT). 8 residues coordinate Ca(2+): D1508, D1514, D1563, D1565, D1571, D1836, S1839, and D1842. A helical membrane pass occupies residues 1964–1984 (WLLLKFLLLFLLLLLFALFLY). The Extracellular portion of the chain corresponds to 1985–1997 (SLPGYLAKKILGA).

It belongs to the ferlin family. Interacts with SNAP25; the interaction is direct. Interacts with STX1; the interaction is direct. Interacts with RAB8B. Ca(2+) serves as cofactor. In terms of tissue distribution, isoform 1 is expressed in cochlea and brain. Expressed in the cochlear and vestibular hair cells. Expressed in both inner and outer hair cells (IHCs and OHCs) and cochlear ganglions neurons at postnatal day 2 (P2) and 6 (P6). Expressed only in IHCs at postnatal day 60 (P60) (at protein level). Strongly expressed in brain and inner ear. In the inner ear, it is mainly expressed in the cochlear IHC and vestibular type I sensory hair cells. Weakly expressed in eye, heart, skeletal muscle, liver, kidney, lung and testis.

It is found in the cytoplasmic vesicle. It localises to the secretory vesicle. Its subcellular location is the synaptic vesicle membrane. The protein localises to the basolateral cell membrane. The protein resides in the endoplasmic reticulum membrane. It is found in the golgi apparatus membrane. It localises to the presynaptic cell membrane. Its subcellular location is the cell membrane. Functionally, key calcium ion sensor involved in the Ca(2+)-triggered synaptic vesicle-plasma membrane fusion and in the control of neurotransmitter release at these output synapses. Interacts in a calcium-dependent manner to the presynaptic SNARE proteins at ribbon synapses of cochlear inner hair cells (IHCs) to trigger exocytosis of neurotransmitter. Also essential to synaptic exocytosis in immature outer hair cells (OHCs). May also play a role within the recycling of endosomes. This is Otoferlin (Otof) from Mus musculus (Mouse).